Reading from the N-terminus, the 290-residue chain is Glycine--tRNA ligase alpha subunit (290 aa).

It belongs to the class-II aminoacyl-tRNA synthetase family. As to quaternary structure, tetramer of two alpha and two beta subunits.

The protein localises to the cytoplasm. The catalysed reaction is tRNA(Gly) + glycine + ATP = glycyl-tRNA(Gly) + AMP + diphosphate. This Zymomonas mobilis subsp. mobilis (strain ATCC 31821 / ZM4 / CP4) protein is Glycine--tRNA ligase alpha subunit.